The chain runs to 400 residues: Argininosuccinate synthase (400 aa).

8–16 (AYSGGLDTS) lines the ATP pocket. L-citrulline is bound by residues tyrosine 87 and serine 92. Glycine 117 is an ATP binding site. L-aspartate-binding residues include threonine 119, asparagine 123, and aspartate 124. An L-citrulline-binding site is contributed by asparagine 123. 4 residues coordinate L-citrulline: arginine 127, serine 175, glutamate 259, and tyrosine 271.

Belongs to the argininosuccinate synthase family. Type 1 subfamily. In terms of assembly, homotetramer.

The protein localises to the cytoplasm. It carries out the reaction L-citrulline + L-aspartate + ATP = 2-(N(omega)-L-arginino)succinate + AMP + diphosphate + H(+). It functions in the pathway amino-acid biosynthesis; L-arginine biosynthesis; L-arginine from L-ornithine and carbamoyl phosphate: step 2/3. In Frankia alni (strain DSM 45986 / CECT 9034 / ACN14a), this protein is Argininosuccinate synthase.